The sequence spans 674 residues: ATP-dependent DNA helicase Rep (674 aa).

The region spanning 1–280 (MRLNPGQQHA…IKLEQNYRSS (280 aa)) is the UvrD-like helicase ATP-binding domain. ATP contacts are provided by residues 22-29 (AGAGSGKT) and R278. The region spanning 281–562 (GRILKAANIL…QLMTLHASKG (282 aa)) is the UvrD-like helicase C-terminal domain.

Belongs to the helicase family. UvrD subfamily. In terms of assembly, homodimer.

It catalyses the reaction Couples ATP hydrolysis with the unwinding of duplex DNA by translocating in the 3'-5' direction.. It carries out the reaction ATP + H2O = ADP + phosphate + H(+). Its function is as follows. Rep helicase is a single-stranded DNA-dependent ATPase involved in DNA replication; it can initiate unwinding at a nick in the DNA. It binds to the single-stranded DNA and acts in a progressive fashion along the DNA in the 3' to 5' direction. This chain is ATP-dependent DNA helicase Rep, found in Salmonella typhimurium (strain LT2 / SGSC1412 / ATCC 700720).